Consider the following 346-residue polypeptide: MTILTVRQIQNNYYTEYYMGPVRNFADKKEVYFDAKVNNIESKVNKDKALLHITLALKYDSNFPSNMFQAQFKLGNWSSEKIPLQKAPDKKSDLENKIHYFYATLEVPRTALIKREINRISEYIREELTIAFRLNDSSDRYHWSNYNLFDTVAADMYQTVIKETVTFGNMIRLNQLEGEKEGNIQQSELKYGWTMLDYRNMGPLEEVNNLINIKFNQPVKVVSVGVTVSYTAPDGKRQELKDQAEYQHTLNPNEEFKLNFPRRLSFNRVTKKLDFDPNGSAVFLPQGGFGSYEIKLEANVGNQFYTIVATNSFEYAHPFDDPKTNDFFLVQYAPVYSLFNFSDLIQ.

This is an uncharacterized protein from Mycoplasma pneumoniae (strain ATCC 29342 / M129 / Subtype 1) (Mycoplasmoides pneumoniae).